The sequence spans 763 residues: C6 finger domain transcription factor hasF (763 aa).

Residues 1-20 (MDSTTSSSRFSVSSPQSGPS) show a composition bias toward low complexity. Residues 1–25 (MDSTTSSSRFSVSSPQSGPSAGIQK) form a disordered region. Positions 34-61 (CLTCRRRKVKCDHAQPVCTPCQRGGRVC) form a DNA-binding region, zn(2)-C6 fungal-type. Disordered regions lie at residues 68-91 (PVSQ…RSGQ), 112-145 (GGNM…PKCE), and 189-219 (DQSS…ESLT). Polar residues predominate over residues 80 to 89 (SRVSRTNLRS). Over residues 197–209 (DSPPSDQPTPPFP) the composition is skewed to pro residues.

The protein resides in the nucleus. In terms of biological role, transcription factor; part of the gene cluster that mediates the biosynthesis of hexadehydro-astechrome (HAS), a tryptophan-derived iron(III)-complex that acts as a virulence factor in infected mice. Does not regulate the expression of the HAS biosynthetic genes (at least under the growth conditions tested). This chain is C6 finger domain transcription factor hasF, found in Aspergillus fumigatus (strain CBS 144.89 / FGSC A1163 / CEA10) (Neosartorya fumigata).